Here is a 100-residue protein sequence, read N- to C-terminus: MAKKSLIYREKKRQKLEKKYHLIRRSSKKEISEIPSLSEKWKIHGKLQSPPRNSAPTRLHRRCFSTGRPRANYRDFGLSGHILREMVQACLLPGATRSSW.

It belongs to the universal ribosomal protein uS14 family. As to quaternary structure, part of the 30S ribosomal subunit.

It localises to the plastid. Its subcellular location is the chloroplast. In terms of biological role, binds 16S rRNA, required for the assembly of 30S particles. The chain is Small ribosomal subunit protein uS14c from Capsella bursa-pastoris (Shepherd's purse).